The primary structure comprises 882 residues: MSKNIDDIKNEDGKKVKIIKLKKKVVKIVTYNDLSVKNDSNSFVDLHNNSNKAEYSQSRDNRTGGYSQNRDNRAGGYSQNRDNRAGGYSQNRDNRTGGYSQNRDNRTGGYSQNRDNRTGGYSQNRDNRGGYSQGRDNRTGGYSQSRDNRTGGYSQNRDNRTGGYSQNRDNRTGGYSQNRDNRTGGYSQNRDSLSFQYQGSVKKTYVAKNNSQNKYTTTSMSFRRLIKTKVPAIVSSTPAADSENSKELNRKLGEKKKQQQESQKSYKRKKAETESKTIEQKVFEQLQKKKRENLANPIPKSIDIMGSITVSDLARKMNLKSSDLIAKLMALGVMVTINEKIDSDTATILVEEYGSKVNVVSIYDETVIEEEVEDQSKRVEKPPVITIMGHVDHGKTKLLSVLQNIDINQTESGGITQHIGAYTIVYNDREITFLDTPGHEAFTMMRSRGAQVTDIVVLVVSAIDGVMPQTIEAINHAKEANVPIIVAINKIDLPDSNPDKIKHQLSEYGLVSEDWGGDTIFVMISALKNIGISELLDMILLQSDMMLLKANPSKRAIGKVLDAKIDLGRGIVCSVIIEDGTLYVGDSFVGGACYGKVKALISEKGVSVKSVGPAKAISVLGFSSMPQAGDPFQVTKTEKEAKLISSKRQDLKKYESSKNVKKVTMLNLYDSIKEGALKELKIILKADVQGSVEALKNSLEKLTNDEVRVRVVHSSAGVITETDISFASASDAIVIGFHVRPTAKAQVLADQEKVEIRKYNVIYDAINDVRSVLEGMLEPDVEQQFIGFAEVRAVINVPKIGVIAGCYVSRGLIKRDAITNVMRDGLQIHSGKISSLKRFKDDVKEVAEQYECGIMIDNYANIKEGDIIEAFEVKKVKKSFKT.

Polar residues-rich tracts occupy residues 38–56, 97–124, and 140–192; these read NDSNSFVDLHNNSNKAEYS, GGYSQNRDNRTGGYSQNRDNRTGGYSQN, and GGYS…NRDS. 2 disordered regions span residues 38–192 and 236–274; these read NDSN…NRDS and STPAADSENSKELNRKLGEKKKQQQESQKSYKRKKAETE. Basic and acidic residues predominate over residues 243-259; sequence ENSKELNRKLGEKKKQQ. Residues 380-553 enclose the tr-type G domain; that stretch reads EKPPVITIMG…DMMLLKANPS (174 aa). The tract at residues 389–396 is G1; it reads GHVDHGKT. Position 389–396 (389–396) interacts with GTP; it reads GHVDHGKT. Residues 414-418 are G2; it reads GITQH. Residues 435–438 are G3; the sequence is DTPG. GTP contacts are provided by residues 435-439 and 489-492; these read DTPGH and NKID. Residues 489–492 are G4; that stretch reads NKID. Residues 525-527 are G5; that stretch reads SAL.

This sequence belongs to the TRAFAC class translation factor GTPase superfamily. Classic translation factor GTPase family. IF-2 subfamily.

It localises to the cytoplasm. In terms of biological role, one of the essential components for the initiation of protein synthesis. Protects formylmethionyl-tRNA from spontaneous hydrolysis and promotes its binding to the 30S ribosomal subunits. Also involved in the hydrolysis of GTP during the formation of the 70S ribosomal complex. The chain is Translation initiation factor IF-2 (infB) from Borreliella burgdorferi (strain ATCC 35210 / DSM 4680 / CIP 102532 / B31) (Borrelia burgdorferi).